Here is a 380-residue protein sequence, read N- to C-terminus: MAPNIRKSHPLLKMVNNSLIDLPTPSNISAWWNFGSLLGICLVTQILTGLLLAMHYTADTNLAFSSVSHTCRNVQYGWLIRNLHANGASLFFICIYMHIGRGIYYGSYLYKETWNTGIILLLTLMATAFVGYVLPWGQMSFWGATVITNLFSAIPYIGQTLVEWAWGGFSVDNPTLTRFFALHFLLPFLIAGLTLIHLTFLHESGSNNPLGITSNCDKIPFHPYFSSKDILGFMLLYFLLTTLALFSPNLLGDPENFTPANPLVTPPHIKPEWYFLFAYAILRSIPNKLGGVLALAASILILFLSPFLHKSKQRTMTFRPLSQMLFWLLVTNLLILTWIGSQPVEHPFIIIGQLASLTYFTILLILLPLTGALENKILNY.

The next 4 membrane-spanning stretches (helical) occupy residues 34-54, 78-99, 114-134, and 179-199; these read FGSL…LLAM, WLIR…YMHI, WNTG…GYVL, and FFAL…IHLT. Residues His-84 and His-98 each contribute to the heme b site. His-183 and His-197 together coordinate heme b. His-202 is a binding site for a ubiquinone. Helical transmembrane passes span 227–247, 289–309, 321–341, and 348–368; these read SKDI…ALFS, LGGV…PFLH, LSQM…WIGS, and FIII…ILLP.

This sequence belongs to the cytochrome b family. As to quaternary structure, the cytochrome bc1 complex contains 11 subunits: 3 respiratory subunits (MT-CYB, CYC1 and UQCRFS1), 2 core proteins (UQCRC1 and UQCRC2) and 6 low-molecular weight proteins (UQCRH/QCR6, UQCRB/QCR7, UQCRQ/QCR8, UQCR10/QCR9, UQCR11/QCR10 and a cleavage product of UQCRFS1). This cytochrome bc1 complex then forms a dimer. Heme b serves as cofactor.

The protein resides in the mitochondrion inner membrane. In terms of biological role, component of the ubiquinol-cytochrome c reductase complex (complex III or cytochrome b-c1 complex) that is part of the mitochondrial respiratory chain. The b-c1 complex mediates electron transfer from ubiquinol to cytochrome c. Contributes to the generation of a proton gradient across the mitochondrial membrane that is then used for ATP synthesis. The chain is Cytochrome b (MT-CYB) from Caracara plancus (Southern caracara).